The following is a 125-amino-acid chain: MDELELRIRKAEKLVQDAKKEFEMGLYERCCSTAYYAMFHAAKAMLLGYGRDSKTHRGTIYLIWECREELGLSDDDCSKLSRAFDLREESDYGIYKEVSKDLAIKILKDAEIFVQKAKNAVNKNR.

This sequence belongs to the UPF0332 family.

The protein is UPF0332 protein AF_0298 of Archaeoglobus fulgidus (strain ATCC 49558 / DSM 4304 / JCM 9628 / NBRC 100126 / VC-16).